The following is a 643-amino-acid chain: Phosphomethylpyrimidine synthase (643 aa).

Substrate-binding positions include N221, M250, Y279, H315, 335–337, 376–379, and E415; these read SRG and DGLR. Residue H419 participates in Zn(2+) binding. Y442 is a binding site for substrate. Position 483 (H483) interacts with Zn(2+). [4Fe-4S] cluster-binding residues include C563, C566, and C571.

The protein belongs to the ThiC family. In terms of assembly, homodimer. It depends on [4Fe-4S] cluster as a cofactor.

It catalyses the reaction 5-amino-1-(5-phospho-beta-D-ribosyl)imidazole + S-adenosyl-L-methionine = 4-amino-2-methyl-5-(phosphooxymethyl)pyrimidine + CO + 5'-deoxyadenosine + formate + L-methionine + 3 H(+). It functions in the pathway cofactor biosynthesis; thiamine diphosphate biosynthesis. In terms of biological role, catalyzes the synthesis of the hydroxymethylpyrimidine phosphate (HMP-P) moiety of thiamine from aminoimidazole ribotide (AIR) in a radical S-adenosyl-L-methionine (SAM)-dependent reaction. The protein is Phosphomethylpyrimidine synthase of Nitrobacter hamburgensis (strain DSM 10229 / NCIMB 13809 / X14).